We begin with the raw amino-acid sequence, 442 residues long: MDQEIYLIGLNHRTASVEVRERFALTDCTVLEQGVVPTGDDISEVVILSTCNRVEIMAVGNGPGVPARVLDCWAAARGQKRSDLEPFVYVHKGIDAVRHLFSVASSLDSMVVGEPQILGQLKDAYRKAVGRNATRVVLNRLLHKAFSVAKRVRTETGVASSAVSISYAAVELAKRIFGEMSQYKAMLIGAGEMAELAATHLLNSGIREIMVANRTFERGLQLARQFKGEAVLFQDLSVRLAEADIIISSTGAHEPIIRARDIKDVLKRRKNRPMFFIDIAVPRDIDPDVNNLDNVYLYDIDDLKEVVEENMAQRRDEAAKARSIVEEEAGNFAKWLKSLDLQPTIVDLLRRSERIAQDELARTLKRLGPVDDATREALQAMLCAIVKKVNHEPITFLKRRFDEEEAGTRYIDITRRMFNLDCDDVPDDAHSDRKHTQQRDDA.

Substrate-binding positions include 50–53, Ser109, 114–116, and Gln120; these read TCNR and EPQ. Cys51 acts as the Nucleophile in catalysis. 189-194 contacts NADP(+); that stretch reads GAGEMA.

Belongs to the glutamyl-tRNA reductase family. As to quaternary structure, homodimer.

The enzyme catalyses (S)-4-amino-5-oxopentanoate + tRNA(Glu) + NADP(+) = L-glutamyl-tRNA(Glu) + NADPH + H(+). It functions in the pathway porphyrin-containing compound metabolism; protoporphyrin-IX biosynthesis; 5-aminolevulinate from L-glutamyl-tRNA(Glu): step 1/2. Its function is as follows. Catalyzes the NADPH-dependent reduction of glutamyl-tRNA(Glu) to glutamate 1-semialdehyde (GSA). This is Glutamyl-tRNA reductase from Nitratidesulfovibrio vulgaris (strain DSM 19637 / Miyazaki F) (Desulfovibrio vulgaris).